The primary structure comprises 944 residues: Weak acid resistance protein 1 (944 aa).

The zn(2)-C6 fungal-type DNA-binding region spans 76–109 (CVCCHSLKQKCEPSDVNDIYRKPCRRCLKHKKLC). Disordered stretches follow at residues 114–171 (SKRT…AKQF) and 197–225 (SYGA…SVPT). Thr-128 is subject to Phosphothreonine. Composition is skewed to polar residues over residues 135–144 (VNVSTKSKGP) and 205–225 (TTST…SVPT).

Homodimer. In terms of processing, phosphorylation is required for PDR12 induction.

Its subcellular location is the nucleus. Transcription factor which binds to a weak acid response element (WARE) to mediate stress induction of PDR12 and FUN34, encoding an acid transporter and a putative ammonia transporter, respectively. The chain is Weak acid resistance protein 1 (WAR1) from Saccharomyces cerevisiae (strain ATCC 204508 / S288c) (Baker's yeast).